Here is a 322-residue protein sequence, read N- to C-terminus: Lipoyl synthase (322 aa).

7 residues coordinate [4Fe-4S] cluster: Cys61, Cys66, Cys72, Cys87, Cys91, Cys94, and Ser300. One can recognise a Radical SAM core domain in the interval Trp73–Leu289.

Belongs to the radical SAM superfamily. Lipoyl synthase family. Requires [4Fe-4S] cluster as cofactor.

It localises to the cytoplasm. It carries out the reaction [[Fe-S] cluster scaffold protein carrying a second [4Fe-4S](2+) cluster] + N(6)-octanoyl-L-lysyl-[protein] + 2 oxidized [2Fe-2S]-[ferredoxin] + 2 S-adenosyl-L-methionine + 4 H(+) = [[Fe-S] cluster scaffold protein] + N(6)-[(R)-dihydrolipoyl]-L-lysyl-[protein] + 4 Fe(3+) + 2 hydrogen sulfide + 2 5'-deoxyadenosine + 2 L-methionine + 2 reduced [2Fe-2S]-[ferredoxin]. It functions in the pathway protein modification; protein lipoylation via endogenous pathway; protein N(6)-(lipoyl)lysine from octanoyl-[acyl-carrier-protein]: step 2/2. Functionally, catalyzes the radical-mediated insertion of two sulfur atoms into the C-6 and C-8 positions of the octanoyl moiety bound to the lipoyl domains of lipoate-dependent enzymes, thereby converting the octanoylated domains into lipoylated derivatives. This Rhizobium meliloti (strain 1021) (Ensifer meliloti) protein is Lipoyl synthase.